The primary structure comprises 87 residues: MKTFEELFTELSEKARTRPAGSRTVAQLDAGVHAIGKKVVEEAAEVWMAAEYQSDEETAEEISQLLYHVQVLMLARGLRLEDVYRHL.

The protein belongs to the PRA-PH family.

The protein localises to the cytoplasm. It carries out the reaction 1-(5-phospho-beta-D-ribosyl)-ATP + H2O = 1-(5-phospho-beta-D-ribosyl)-5'-AMP + diphosphate + H(+). It functions in the pathway amino-acid biosynthesis; L-histidine biosynthesis; L-histidine from 5-phospho-alpha-D-ribose 1-diphosphate: step 2/9. The polypeptide is Phosphoribosyl-ATP pyrophosphatase (Thermobifida fusca (strain YX)).